We begin with the raw amino-acid sequence, 226 residues long: NAD(P)H-quinone oxidoreductase subunit K, chloroplastic (226 aa).

[4Fe-4S] cluster is bound by residues Cys-43, Cys-44, Cys-108, and Cys-139.

It belongs to the complex I 20 kDa subunit family. NDH is composed of at least 16 different subunits, 5 of which are encoded in the nucleus. Requires [4Fe-4S] cluster as cofactor.

The protein localises to the plastid. It localises to the chloroplast thylakoid membrane. It carries out the reaction a plastoquinone + NADH + (n+1) H(+)(in) = a plastoquinol + NAD(+) + n H(+)(out). It catalyses the reaction a plastoquinone + NADPH + (n+1) H(+)(in) = a plastoquinol + NADP(+) + n H(+)(out). Functionally, NDH shuttles electrons from NAD(P)H:plastoquinone, via FMN and iron-sulfur (Fe-S) centers, to quinones in the photosynthetic chain and possibly in a chloroplast respiratory chain. The immediate electron acceptor for the enzyme in this species is believed to be plastoquinone. Couples the redox reaction to proton translocation, and thus conserves the redox energy in a proton gradient. This chain is NAD(P)H-quinone oxidoreductase subunit K, chloroplastic, found in Lupinus luteus (European yellow lupine).